A 386-amino-acid chain; its full sequence is Small ribosomal subunit protein mS31 (386 aa).

Belongs to the mitochondrion-specific ribosomal protein mS31 family. Component of the mitochondrial ribosome small subunit (28S) which comprises a 12S rRNA and about 30 distinct proteins.

The protein localises to the mitochondrion. This is Small ribosomal subunit protein mS31 (MRPS31) from Bos taurus (Bovine).